Consider the following 403-residue polypeptide: Putative transport protein TP_0553 (403 aa).

A run of 8 helical transmembrane segments spans residues 10–30 (ISLF…FVPY), 31–51 (LTVL…YRAL), 92–112 (AAVF…FIAI), 202–222 (LYFF…ALPL), 243–263 (KGLF…YGIF), 271–291 (LAML…CVWL), 293–313 (VGIS…LFVA), and 350–370 (TFGF…FTVI).

This sequence belongs to the autoinducer-2 exporter (AI-2E) (TC 2.A.86) family.

It is found in the cell membrane. The polypeptide is Putative transport protein TP_0553 (Treponema pallidum (strain Nichols)).